Consider the following 160-residue polypeptide: Major strawberry allergen Fra a 1.05 (160 aa).

The protein belongs to the BetVI family. In terms of processing, phosphorylated in vivo. Phosphorylation prevents its activity as ribonuclease.

Its function is as follows. Possesses ribonuclease activity in vitro. In Fragaria ananassa (Strawberry), this protein is Major strawberry allergen Fra a 1.05.